Consider the following 260-residue polypeptide: MNVFDVETYLQRIGCGGETGVDLETLAKLQKSHLMAIPYSSLAYELRDAVNVVDLDEDDVFVTSIAEGQGGACYHLNRLFHRLLTELGYDVTPLAGSTAEGRETFGTDVEHMFNLVTLDGADWLVDVGYPGPTYVEPLAVSPAVQTQYGSQFRLVEQETGYALQRRGAVTRWSVVYTFTTQPRQWSDWKELEDNFRALVGDTTRTDTQETLCGRAFANGQVFLRQRRYLTVENGREQVRTITDDDEFRALVSRVLSGDHG.

Catalysis depends on Cys-73, which acts as the Acyl-thioester intermediate. Residues His-111 and Asp-126 contribute to the active site.

It belongs to the arylamine N-acetyltransferase family.

Its pathway is antibiotic biosynthesis; rifamycin B biosynthesis. Functionally, catalyzes the release of the completed linear polyketide from the rif PKS by forming an intramolecular amide bond, in this way terminating polyketide assembly and forming the macrocyclic compound proansamycin X, an intermediate in the rifamycin B biosynthesis. This Amycolatopsis mediterranei (strain S699) (Nocardia mediterranei) protein is Proansamycin X synthase (rifF).